The chain runs to 293 residues: 33 kDa chaperonin (293 aa).

2 disulfides stabilise this stretch: Cys238–Cys240 and Cys271–Cys274.

It belongs to the HSP33 family. In terms of processing, under oxidizing conditions two disulfide bonds are formed involving the reactive cysteines. Under reducing conditions zinc is bound to the reactive cysteines and the protein is inactive.

Its subcellular location is the cytoplasm. Redox regulated molecular chaperone. Protects both thermally unfolding and oxidatively damaged proteins from irreversible aggregation. Plays an important role in the bacterial defense system toward oxidative stress. This is 33 kDa chaperonin from Staphylococcus aureus (strain USA300).